The sequence spans 303 residues: MNYLLGAFKPACNISITFSDGKNRKQVPMKKENGQTALVPLFHSQDTISGKVCIEPYQGKKVEHNGVKVELLGQIEMYFDRGNFYDFTSLVRELDVPGEIYERKTYPFEFPTVEMPYETYNGVNVRLRYVLKVTVTRGYAGSILEYQELVVRNYAPLPDINNSIKMEVGIEDCLHIEFEYNKSKYHLKDVILGKIYFLLVRIKMKNMDLEIRRRESTGAGANTHVETETLAKFELMDGTPVRGESIPVRLFLAPYDLTPTHRNINNKFSVKYYLNLVLVDEEDRRYFKQQEITLYRLKEDASS.

It belongs to the VPS26 family. As to quaternary structure, component of the retromer complex which consists of VPS29 (MAG1), VPS26 (VPS26A or VPS26B), VPS35 (VPS35A or VPS35B or VPS35C), VPS5/17 (SNX1 or SNX2A or SNX2B). Component of a retromer subcomplex consisting of VPS29 (MAG1), VPS26 (VPS26A or VPS26B), VPS35 (VPS35A or VPS35B or VPS35C).

It is found in the cytoplasm. Its subcellular location is the endosome membrane. It localises to the prevacuolar compartment membrane. The protein localises to the golgi apparatus. The protein resides in the trans-Golgi network membrane. Functionally, plays a role in vesicular protein sorting. Component of the membrane-associated retromer complex which is essential in endosome-to-Golgi retrograde transport. The VPS29-VPS26-VPS35 subcomplex may be involved in recycling of specific cargos from endosome to the plasma membrane. The polypeptide is Vacuolar protein sorting-associated protein 26B (VPS26B) (Arabidopsis thaliana (Mouse-ear cress)).